The chain runs to 197 residues: TLE family member 5 (197 aa).

Positions 166–197 (LSALGSQAHLSKEDKNGHDGDTHQEDDGEKSD) are CCN domain. Residues 174–197 (HLSKEDKNGHDGDTHQEDDGEKSD) form a disordered region. Basic and acidic residues predominate over residues 175-197 (LSKEDKNGHDGDTHQEDDGEKSD). Phosphoserine is present on serine 196.

The protein belongs to the WD repeat Groucho/TLE family. Homooligomer and heterooligomer with other family members. Binds TCF7. Binds the NF-kappa-B subunit RELA. Interacts with PHF12. Interacts (via Q domain) with SIX3. Interacts with SIX6. Post-translationally, ubiquitinated by XIAP/BIRC4. As to expression, found predominantly in muscle, heart and Placenta. In fetal tissues, abundantly expressed in the heart, lung, kidney, brain and liver.

The protein localises to the nucleus. In terms of biological role, transcriptional corepressor. Acts as a dominant repressor towards other family members. Inhibits NF-kappa-B-regulated gene expression. May be required for the initiation and maintenance of the differentiated state. Essential for the transcriptional repressor activity of SIX3 during retina and lens development. The sequence is that of TLE family member 5 from Homo sapiens (Human).